The sequence spans 211 residues: Large ribosomal subunit protein uL3 (211 aa).

A disordered region spans residues His-126 to Gly-147.

The protein belongs to the universal ribosomal protein uL3 family. Part of the 50S ribosomal subunit. Forms a cluster with proteins L14 and L19.

In terms of biological role, one of the primary rRNA binding proteins, it binds directly near the 3'-end of the 23S rRNA, where it nucleates assembly of the 50S subunit. In Geobacillus thermodenitrificans (strain NG80-2), this protein is Large ribosomal subunit protein uL3.